The following is a 358-amino-acid chain: Protein RecA (358 aa).

67-74 (GPESSGKT) is a binding site for ATP.

The protein belongs to the RecA family.

It is found in the cytoplasm. Its function is as follows. Can catalyze the hydrolysis of ATP in the presence of single-stranded DNA, the ATP-dependent uptake of single-stranded DNA by duplex DNA, and the ATP-dependent hybridization of homologous single-stranded DNAs. It interacts with LexA causing its activation and leading to its autocatalytic cleavage. This is Protein RecA from Xenorhabdus bovienii (Xenorhabdus nematophila subsp. bovienii).